The sequence spans 75 residues: UPF0270 protein PputGB1_1339 (75 aa).

It belongs to the UPF0270 family.

The sequence is that of UPF0270 protein PputGB1_1339 from Pseudomonas putida (strain GB-1).